The following is a 762-amino-acid chain: Probable inorganic carbon transporter subunit DabA (762 aa).

Cysteine 279, aspartate 281, histidine 461, and cysteine 476 together coordinate Zn(2+).

This sequence belongs to the inorganic carbon transporter (TC 9.A.2) DabA family. As to quaternary structure, forms a complex with DabB. The cofactor is Zn(2+).

Its subcellular location is the cell inner membrane. Functionally, part of an energy-coupled inorganic carbon pump. In Legionella pneumophila (strain Corby), this protein is Probable inorganic carbon transporter subunit DabA.